The chain runs to 107 residues: Integration host factor subunit beta (107 aa).

The interval 76 to 107 (FVPHFKPGKELRERVDGRAGEPLKADDPDDER) is disordered. Over residues 82 to 101 (PGKELRERVDGRAGEPLKAD) the composition is skewed to basic and acidic residues.

The protein belongs to the bacterial histone-like protein family. As to quaternary structure, heterodimer of an alpha and a beta chain.

This protein is one of the two subunits of integration host factor, a specific DNA-binding protein that functions in genetic recombination as well as in transcriptional and translational control. The sequence is that of Integration host factor subunit beta from Burkholderia cenocepacia (strain ATCC BAA-245 / DSM 16553 / LMG 16656 / NCTC 13227 / J2315 / CF5610) (Burkholderia cepacia (strain J2315)).